A 411-amino-acid polypeptide reads, in one-letter code: MAAFRAAHRLLGHILRNESSAGLVTQRWSSSAAVASVPKSSDPKPHAQPDKRKPKTGILMLNMGGPETLDDVHGFLLRLFLDKDLMTLPAQSKLAPFIAKRRTPKIQEQYSKIGGGSPIKKWTEQQGEGMVKLLDELSPATAPHKYYIGFRYVRPLTEAAIEEMERDGVERAIAFTQYPQYSCSTTGSSLNAIYRYYNAKGTQPKMKWSVIDRWPTHPLLIQCFADHIQKELNMFPADKRGEVVILFSAHSLPMSVVNRGDPYPQEVGATVQKVMERLGFSNPYRLVWQSKVGPMAWLGPQTDESIKGLCQRGKKNILLVPIAFTSDHIETLYELDIEYAQVLAKECGVENIRRSESLNGNPLFSKALADLVLSHMKSSEICSKQLSLRCPMCVNPVCGEAKSFFTKQQQQ.

A mitochondrion-targeting transit peptide spans 1–41; it reads MAAFRAAHRLLGHILRNESSAGLVTQRWSSSAAVASVPKSS. Positions 34–55 are disordered; the sequence is VASVPKSSDPKPHAQPDKRKPK. The span at 41-51 shows a compositional bias: basic and acidic residues; it reads SDPKPHAQPDK. Protoporphyrin IX-binding residues include Arg102, Tyr110, and Ser117. Residue Cys183 coordinates [2Fe-2S] cluster. Catalysis depends on residues His217 and Asp370. Residues Cys390, Cys393, and Cys398 each coordinate [2Fe-2S] cluster.

Belongs to the ferrochelatase family. In terms of assembly, homodimer. Homotetramer. [2Fe-2S] cluster is required as a cofactor.

The protein localises to the mitochondrion inner membrane. The enzyme catalyses heme b + 2 H(+) = protoporphyrin IX + Fe(2+). The protein operates within porphyrin-containing compound metabolism; protoheme biosynthesis; protoheme from protoporphyrin-IX: step 1/1. Functionally, catalyzes the ferrous insertion into protoporphyrin IX. This chain is Ferrochelatase, mitochondrial, found in Xenopus laevis (African clawed frog).